We begin with the raw amino-acid sequence, 61 residues long: UPF0181 protein KPN78578_22920 (61 aa).

Belongs to the UPF0181 family.

This is UPF0181 protein KPN78578_22920 from Klebsiella pneumoniae subsp. pneumoniae (strain ATCC 700721 / MGH 78578).